The following is a 333-amino-acid chain: Meiotic recombination protein rec24 (333 aa).

The protein belongs to the MEI4L family. Interacts with Rec7, as part of the meiotic recombination initiation complex.

Its subcellular location is the cytoplasm. It is found in the nucleus. Functionally, required for correct meiotic chromosome segregation and recombination. Accessory protein required for Rec12 activity, which is involved in formation of the double-strand breaks (DSBs) that initiate meiotic recombination. The polypeptide is Meiotic recombination protein rec24 (rec24) (Schizosaccharomyces pombe (strain 972 / ATCC 24843) (Fission yeast)).